We begin with the raw amino-acid sequence, 122 residues long: Small ribosomal subunit protein uS13 (122 aa).

The tract at residues 95 to 122 (GLPVRGQRTKTNARTRKGPKKTIAGKKK) is disordered.

Belongs to the universal ribosomal protein uS13 family. As to quaternary structure, part of the 30S ribosomal subunit. Forms a loose heterodimer with protein S19. Forms two bridges to the 50S subunit in the 70S ribosome.

Its function is as follows. Located at the top of the head of the 30S subunit, it contacts several helices of the 16S rRNA. In the 70S ribosome it contacts the 23S rRNA (bridge B1a) and protein L5 of the 50S subunit (bridge B1b), connecting the 2 subunits; these bridges are implicated in subunit movement. Contacts the tRNAs in the A and P-sites. In Corynebacterium aurimucosum (strain ATCC 700975 / DSM 44827 / CIP 107346 / CN-1) (Corynebacterium nigricans), this protein is Small ribosomal subunit protein uS13.